A 549-amino-acid chain; its full sequence is Longitudinals lacking protein, isoforms H/M/V (549 aa).

The BTB domain occupies 32–97 (VDCTLAAEGK…MYRGEVNISQ (66 aa)). 2 disordered regions span residues 115–200 (LSDN…SSVL) and 228–340 (SSGP…ASAS). Low complexity-rich tracts occupy residues 162-175 (SGDV…SSSP), 228-251 (SSGP…LTST), 263-293 (TSST…QTTS), and 329-340 (NSATGPNPASAS).

Mostly neuronal.

The protein localises to the nucleus. Putative transcription factor required for axon growth and guidance in the central and peripheral nervous systems. Repels CNS axons away from the midline by promoting the expression of the midline repellent sli and its receptor robo. The chain is Longitudinals lacking protein, isoforms H/M/V from Drosophila melanogaster (Fruit fly).